The chain runs to 503 residues: Cytochrome P450 11B1, mitochondrial (503 aa).

The N-terminal 24 residues, 1-24 (MALWAKARVWMAGPWLSLHRARPL), are a transit peptide targeting the mitochondrion. Cys450 is a heme binding site.

The protein belongs to the cytochrome P450 family. Requires heme as cofactor.

The protein resides in the mitochondrion inner membrane. It catalyses the reaction a steroid + 2 reduced [adrenodoxin] + O2 + 2 H(+) = an 11beta-hydroxysteroid + 2 oxidized [adrenodoxin] + H2O. The catalysed reaction is 11-deoxycortisol + 2 reduced [adrenodoxin] + O2 + 2 H(+) = cortisol + 2 oxidized [adrenodoxin] + H2O. It carries out the reaction 21-hydroxyprogesterone + 2 reduced [adrenodoxin] + O2 + 2 H(+) = corticosterone + 2 oxidized [adrenodoxin] + H2O. The enzyme catalyses corticosterone + 2 reduced [adrenodoxin] + O2 + 2 H(+) = 18-hydroxycorticosterone + 2 oxidized [adrenodoxin] + H2O. It catalyses the reaction 18-hydroxycorticosterone + 2 reduced [adrenodoxin] + O2 + 2 H(+) = aldosterone + 2 oxidized [adrenodoxin] + 2 H2O. The catalysed reaction is 21-hydroxyprogesterone + 2 reduced [adrenodoxin] + O2 + 2 H(+) = 19-hydroxy-11-deoxycorticosterone + 2 oxidized [adrenodoxin] + H2O. It carries out the reaction 19-hydroxy-11-deoxycorticosterone + 2 reduced [adrenodoxin] + O2 + 2 H(+) = 19-oxo-11-deoxycorticosterone + 2 oxidized [adrenodoxin] + 2 H2O. It functions in the pathway steroid biosynthesis; glucocorticoid biosynthesis. It participates in steroid hormone biosynthesis. Functionally, a cytochrome P450 monooxygenase that catalyzes the biosynthesis of aldosterone and other adrenal corticoids. Differing from other species (such as human, rat and mice), it is able to catalyze three sequential oxidative reactions of 11-deoxycorticosterone (21-hydroxyprogesterone), namely 11-beta hydroxylation, followed by two successive oxidations at C18 yielding 18-hydroxy and then 18-oxo intermediates, and ending with the formation of aldosterone. Steroid 11beta, 18- and 19-hydroxylase. Mechanistically, uses molecular oxygen inserting one oxygen atom into a substrate and reducing the second into a water molecule. Two electrons are provided by NADPH via a two-protein mitochondrial transfer system comprising flavoprotein FDXR (adrenodoxin/ferredoxin reductase) and nonheme iron-sulfur protein FDX1 or FDX2 (adrenodoxin/ferredoxin). The protein is Cytochrome P450 11B1, mitochondrial (CYP11B1) of Ovis aries (Sheep).